The following is a 692-amino-acid chain: Pentatricopeptide repeat-containing protein At2g04860 (692 aa).

PPR repeat units follow at residues 12–46 (DLSY…SLTP), 47–83 (NHFT…GLDR), 84–114 (FVYV…MPER), 115–149 (DTVV…GFSP), 150–184 (SATT…GLEL), 185–215 (DSQV…MKDK), 216–250 (STVS…NVEI), 280–314 (DISV…SIVG), 316–345 (TSIV…CMKI), 346–380 (DAVA…GLCT), 381–411 (KTLV…LQET), 412–447 (PLIS…GLLP), 448–482 (DAIT…NFEN), 483–513 (ENFV…IKAP), 514–548 (CTAT…GLKP), 549–584 (DEIT…GISP), and 585–615 (TLQH…MDIK). The segment at 620–692 (VWGALLSACI…YDGYLGVSQI (73 aa)) is type E motif; degenerate.

This sequence belongs to the PPR family. PCMP-E subfamily.

The protein is Pentatricopeptide repeat-containing protein At2g04860 (PCMP-E74) of Arabidopsis thaliana (Mouse-ear cress).